The sequence spans 442 residues: UDP-N-acetylmuramoylalanine--D-glutamate ligase (442 aa).

115–121 (GSNGKST) is a binding site for ATP.

This sequence belongs to the MurCDEF family.

The protein resides in the cytoplasm. It catalyses the reaction UDP-N-acetyl-alpha-D-muramoyl-L-alanine + D-glutamate + ATP = UDP-N-acetyl-alpha-D-muramoyl-L-alanyl-D-glutamate + ADP + phosphate + H(+). The protein operates within cell wall biogenesis; peptidoglycan biosynthesis. Functionally, cell wall formation. Catalyzes the addition of glutamate to the nucleotide precursor UDP-N-acetylmuramoyl-L-alanine (UMA). The sequence is that of UDP-N-acetylmuramoylalanine--D-glutamate ligase from Vibrio vulnificus (strain YJ016).